The following is a 429-amino-acid chain: Glycogenin-1 (429 aa).

UDP contacts are provided by Leu-8, Thr-10, Asn-11, Tyr-14, and Arg-76. 14 residues coordinate UDP-alpha-D-glucose: Leu-8, Thr-10, Asn-11, Tyr-14, Arg-76, Lys-85, Asp-101, Ala-102, Asp-103, Asn-132, Ser-133, Asp-159, Asp-162, and Gln-163. Residues Asp-101, Ala-102, and Asp-103 each contribute to the UDP site. Position 101 (Asp-101) interacts with Mn(2+). Position 103 (Asp-103) interacts with Mn(2+). Tyr-194 carries an O-linked (Glc...) tyrosine glycan. Residues His-211, Gly-214, and Lys-217 each contribute to the UDP site. Position 211 (His-211) interacts with Mn(2+). 2 residues coordinate UDP-alpha-D-glucose: Gly-214 and Lys-217. Disordered stretches follow at residues 254 to 274 and 300 to 338; these read VFPS…HPKI and SYDT…QTPH. 2 stretches are compositionally biased toward basic and acidic residues: residues 263 to 274 and 309 to 338; these read EHRSHSADHPKI and DSHR…QTPH.

This sequence belongs to the glycosyltransferase 8 family. Glycogenin subfamily. As to quaternary structure, forms a heterooctamer with one molecule of gyg-1 bound to each protomer of the gys-1 homotetramer. The N-terminus of gys-1 is involved in interprotomer contacts with gyg-1. The interaction with gys-1 is required for glycogen production but is not required for gys-1 intrinsic activity. Mn(2+) is required as a cofactor. Post-translationally, self-glycosylated by the transfer of glucose residues from UDP-glucose to itself, forming an alpha-1,4-glycan of around 10 residues attached to Tyr-194.

The protein resides in the cytoplasm. Its subcellular location is the nucleus. It catalyses the reaction L-tyrosyl-[glycogenin] + UDP-alpha-D-glucose = alpha-D-glucosyl-L-tyrosyl-[glycogenin] + UDP + H(+). It carries out the reaction [1,4-alpha-D-glucosyl](n)-L-tyrosyl-[glycogenin] + UDP-alpha-D-glucose = [1,4-alpha-D-glucosyl](n+1)-L-tyrosyl-[glycogenin] + UDP + H(+). The protein operates within glycan biosynthesis; glycogen biosynthesis. Functionally, self-glucosylating initiator of glycogen synthesis. It catalyzes the formation of a short alpha (1,4)-glucosyl chain covalently attached via a glucose 1-O-tyrosyl linkage to internal tyrosine residues and these chains act as primers for the elongation reaction catalyzed by glycogen synthase. This Caenorhabditis elegans protein is Glycogenin-1.